The chain runs to 697 residues: MAITAYDALTERQKAPKVLLINDFAISSSSSSPPFFNLAATFRDNIRSFLREYAEIEDYTIDGATVSTIFLGSQANGVVFPLYIIEQQISDSSPNPLCDFCRCFGWGHHYVTKRKYHMIIPNRDEWNEPLKRESLTLSSHLMHGLIHCNGFGHLLCINTDLDDPNHLSGDQIMDFWDRLCSTLHTRKISLDDTSKKGAMDLRLLHGVAYGRPWFGKWDYMFSHGSFGVKKDLYWRAILTLSSIEVDKILEELSGTSKGRVMKKIIDFYRGSTESPLATLSDLLRFMLGFISKAPIERKTAMALVAMSLDHVSYPTLRADENSEVCTSPDQESDDNGYESGRDTVLDDHNTTTSGIKPPQYYSFDDLSRREHSRWPGRRLNDAAQAVLKVFKERNSTISRQDLREAVRSSIGDTGLIDFLLKHIDKVLIGDQIVQRSTNPKSRMLQFSLRTINSRVQEQKRKKKRKVKPQETSECTSTTPGLSPYDDILYLYQNLLLTYPDSDLYSEASQVILKCKSFVKEWSYQEQNHLTVSCQVLPNHEELLRDFTRLLPPGDLVAVPENATIRELKSAAEKVLRDTYCITETFEVLEIRNRYLEKLDDNVSLKSQGNTEFMVKGFGLDIGTELRYEGGFDDWTVDCKCGARDDDGERMVACDACKVWHHTLCNSIEDDEAVPSVFLCNMCYGDSLRSKKRNLSIR.

2 disordered regions span residues 319-362 (DENS…QYYS) and 457-478 (EQKR…TSTT). A compositionally biased stretch (basic and acidic residues) spans 339 to 349 (SGRDTVLDDHN). The PHD-type zinc-finger motif lies at 635–685 (TVDCKCGARDDDGERMVACDACKVWHHTLCNSIEDDEAVPSVFLCNMCYGD).

The protein resides in the nucleus. The chain is PHD finger protein At2g01810 from Arabidopsis thaliana (Mouse-ear cress).